Consider the following 186-residue polypeptide: Negative modulator of initiation of replication (186 aa).

Residues 93 to 94 form an interaction with DNA region; that stretch reads AV.

Belongs to the SeqA family. Homodimer. Polymerizes to form helical filaments.

Its subcellular location is the cytoplasm. In terms of biological role, negative regulator of replication initiation, which contributes to regulation of DNA replication and ensures that replication initiation occurs exactly once per chromosome per cell cycle. Binds to pairs of hemimethylated GATC sequences in the oriC region, thus preventing assembly of replication proteins and re-initiation at newly replicated origins. Repression is relieved when the region becomes fully methylated. The polypeptide is Negative modulator of initiation of replication (Shewanella halifaxensis (strain HAW-EB4)).